A 349-amino-acid chain; its full sequence is MVDVKFEERRFESPGQLQLLDRQEAEEEEEDCFESIDKLISQGINAGDVKKLQDAGIYTCNGLMMHTKKNLTGIKGLSEAKVDKICEAAEKLVNVGYITGSDVLLKRKSVIRITTGSQALDELLGGGIETLQITEAFGEFRSGKTQIAHTLCVSTQLPVSMHGGNGKVAYIDTEGTFRPDRIVPIAERFGMDASAVLDNIIYARAYTYEHQYNLLLALAAKMSEEPFRLLIVDSVIALFRVDFSGRGELAERQQKLAQMLSRLTKIAEEFNVAVYMTNQVIADPGGGMFISDPKKPAGGHVLAHAATVRLMLRKGKGEQRVCKIFDAPNLPESEAVFQITPGGVADAKD.

Residue 138 to 145 (GEFRSGKT) coordinates ATP. R240 contacts dsDNA. Positions 240, 243, 246, 252, and 320 each coordinate ssDNA. DsDNA-binding residues include R246 and R252.

Belongs to the RecA family. DMC1 subfamily. In terms of assembly, double stacked ring-shaped homooctamer.

The protein localises to the nucleus. In terms of biological role, may participate in meiotic recombination. The chain is Meiotic recombination protein DMC1 homolog (LIM15) from Lilium longiflorum (Trumpet lily).